Reading from the N-terminus, the 537-residue chain is Phenylalanine--tRNA ligase beta subunit (537 aa).

The B5 domain maps to 268–343 (FNFRPYRLNL…KSYGIENVRE (76 aa)). The Mg(2+) site is built by Asp321, Asp327, Glu330, and Asp331.

It belongs to the phenylalanyl-tRNA synthetase beta subunit family. Type 2 subfamily. In terms of assembly, tetramer of two alpha and two beta subunits. The cofactor is Mg(2+).

The protein localises to the cytoplasm. The catalysed reaction is tRNA(Phe) + L-phenylalanine + ATP = L-phenylalanyl-tRNA(Phe) + AMP + diphosphate + H(+). The polypeptide is Phenylalanine--tRNA ligase beta subunit (Thermoplasma volcanium (strain ATCC 51530 / DSM 4299 / JCM 9571 / NBRC 15438 / GSS1)).